The sequence spans 298 residues: tRNA dimethylallyltransferase 2 (298 aa).

ATP is bound at residue 10-17; that stretch reads GPTASGKT. 12–17 serves as a coordination point for substrate; the sequence is TASGKT. The interval 35-38 is interaction with substrate tRNA; the sequence is DSRQ.

Belongs to the IPP transferase family. Monomer. The cofactor is Mg(2+).

It catalyses the reaction adenosine(37) in tRNA + dimethylallyl diphosphate = N(6)-dimethylallyladenosine(37) in tRNA + diphosphate. In terms of biological role, catalyzes the transfer of a dimethylallyl group onto the adenine at position 37 in tRNAs that read codons beginning with uridine, leading to the formation of N6-(dimethylallyl)adenosine (i(6)A). In Syntrophotalea carbinolica (strain DSM 2380 / NBRC 103641 / GraBd1) (Pelobacter carbinolicus), this protein is tRNA dimethylallyltransferase 2.